Here is a 270-residue protein sequence, read N- to C-terminus: Ribosomal RNA small subunit methyltransferase A (270 aa).

S-adenosyl-L-methionine-binding residues include N15, I17, G42, E64, D89, and N108.

Belongs to the class I-like SAM-binding methyltransferase superfamily. rRNA adenine N(6)-methyltransferase family. RsmA subfamily.

The protein resides in the cytoplasm. The enzyme catalyses adenosine(1518)/adenosine(1519) in 16S rRNA + 4 S-adenosyl-L-methionine = N(6)-dimethyladenosine(1518)/N(6)-dimethyladenosine(1519) in 16S rRNA + 4 S-adenosyl-L-homocysteine + 4 H(+). In terms of biological role, specifically dimethylates two adjacent adenosines (A1518 and A1519) in the loop of a conserved hairpin near the 3'-end of 16S rRNA in the 30S particle. May play a critical role in biogenesis of 30S subunits. This Anaplasma marginale (strain Florida) protein is Ribosomal RNA small subunit methyltransferase A.